A 341-amino-acid polypeptide reads, in one-letter code: Glycerol-3-phosphate dehydrogenase [NAD(P)+] 1 (341 aa).

4 residues coordinate NADPH: Ser17, Trp18, Arg37, and Lys112. 2 residues coordinate sn-glycerol 3-phosphate: Lys112 and Gly140. Ala144 is a binding site for NADPH. 5 residues coordinate sn-glycerol 3-phosphate: Lys195, Asp248, Ser258, Arg259, and Asn260. Lys195 acts as the Proton acceptor in catalysis. Arg259 is a binding site for NADPH. NADPH-binding residues include Val283 and Glu285.

The protein belongs to the NAD-dependent glycerol-3-phosphate dehydrogenase family.

It is found in the cytoplasm. The catalysed reaction is sn-glycerol 3-phosphate + NAD(+) = dihydroxyacetone phosphate + NADH + H(+). It carries out the reaction sn-glycerol 3-phosphate + NADP(+) = dihydroxyacetone phosphate + NADPH + H(+). It functions in the pathway membrane lipid metabolism; glycerophospholipid metabolism. Catalyzes the reduction of the glycolytic intermediate dihydroxyacetone phosphate (DHAP) to sn-glycerol 3-phosphate (G3P), the key precursor for phospholipid synthesis. In Mycobacterium bovis (strain ATCC BAA-935 / AF2122/97), this protein is Glycerol-3-phosphate dehydrogenase [NAD(P)+] 1.